The primary structure comprises 326 residues: Interleukin-1-binding protein (326 aa).

Positions 1–18 (MSILPVIFLSIFFYSSFV) are cleaved as a signal peptide. 3 Ig-like domains span residues 24 to 115 (PECI…LNLT), 122 to 212 (SNID…RIVK), and 221 to 322 (PSTM…KTVT). The cysteines at positions 48 and 99 are disulfide-linked. Residues Asn80, Asn103, and Asn113 are each glycosylated (N-linked (GlcNAc...) asparagine; by host). A disulfide bridge connects residues Cys143 and Cys194. Asn206 and Asn237 each carry an N-linked (GlcNAc...) asparagine; by host glycan. An intrachain disulfide couples Cys242 to Cys309.

The protein belongs to the interleukin-1 receptor family. As to quaternary structure, interacts with mouse Il1b.

The protein localises to the secreted. Its function is as follows. May reduce the host inflammatory response by interacting with inteleukin-1 beta (Il1b) and thus decreasing the association between IL1B and its cellular receptor. The protein is Interleukin-1-binding protein (OPG201) of Vaccinia virus (strain Ankara) (VACV).